An 86-amino-acid polypeptide reads, in one-letter code: Co-chaperonin GroES (86 aa).

This sequence belongs to the GroES chaperonin family. Heptamer of 7 subunits arranged in a ring. Interacts with the chaperonin GroEL.

Its subcellular location is the cytoplasm. Functionally, together with the chaperonin GroEL, plays an essential role in assisting protein folding. The GroEL-GroES system forms a nano-cage that allows encapsulation of the non-native substrate proteins and provides a physical environment optimized to promote and accelerate protein folding. GroES binds to the apical surface of the GroEL ring, thereby capping the opening of the GroEL channel. The sequence is that of Co-chaperonin GroES from Campylobacter lari (strain RM2100 / D67 / ATCC BAA-1060).